The chain runs to 226 residues: Phosphoribosylformylglycinamidine synthase subunit PurQ (226 aa).

One can recognise a Glutamine amidotransferase type-1 domain in the interval 2–226 (KIAVIVFPGS…LENGTVIAEG (225 aa)). The active-site Nucleophile is the Cys86. Catalysis depends on residues His195 and Glu197.

As to quaternary structure, part of the FGAM synthase complex composed of 1 PurL, 1 PurQ and 2 PurS subunits.

The protein resides in the cytoplasm. The catalysed reaction is N(2)-formyl-N(1)-(5-phospho-beta-D-ribosyl)glycinamide + L-glutamine + ATP + H2O = 2-formamido-N(1)-(5-O-phospho-beta-D-ribosyl)acetamidine + L-glutamate + ADP + phosphate + H(+). It catalyses the reaction L-glutamine + H2O = L-glutamate + NH4(+). It participates in purine metabolism; IMP biosynthesis via de novo pathway; 5-amino-1-(5-phospho-D-ribosyl)imidazole from N(2)-formyl-N(1)-(5-phospho-D-ribosyl)glycinamide: step 1/2. In terms of biological role, part of the phosphoribosylformylglycinamidine synthase complex involved in the purines biosynthetic pathway. Catalyzes the ATP-dependent conversion of formylglycinamide ribonucleotide (FGAR) and glutamine to yield formylglycinamidine ribonucleotide (FGAM) and glutamate. The FGAM synthase complex is composed of three subunits. PurQ produces an ammonia molecule by converting glutamine to glutamate. PurL transfers the ammonia molecule to FGAR to form FGAM in an ATP-dependent manner. PurS interacts with PurQ and PurL and is thought to assist in the transfer of the ammonia molecule from PurQ to PurL. The chain is Phosphoribosylformylglycinamidine synthase subunit PurQ from Limosilactobacillus fermentum (strain NBRC 3956 / LMG 18251) (Lactobacillus fermentum).